A 349-amino-acid polypeptide reads, in one-letter code: Sesquiterpene synthase MAC_05714 (349 aa).

Residues Asp91 and Asp96 each contribute to the Mg(2+) site. The DDXXXD motif motif lies at 91–96 (DDLFVD). Arg184 serves as a coordination point for substrate. Positions 230, 234, and 238 each coordinate Mg(2+).

Belongs to the terpene synthase family. Mg(2+) is required as a cofactor.

The catalysed reaction is (2E,6E)-farnesyl diphosphate + H2O = (+)-corvol ether B + diphosphate. The enzyme catalyses (2E,6E)-farnesyl diphosphate + H2O = (+)-corvol ether A + diphosphate. Terpene synthase that catalyzes the conversion of (2E,6E)-farnesyl diphosphate (FPP) into sesquiterpenes which are important for fungi-environment interactions. Produces a mixture consisting of 8 sesquiterpenes including corvol ethers A and B, as well as traces of epizonarene, gamma-cadinene, delta-cadinene, alpha-cadinene, alpha-cadinol, and an unidentified sesquiterpene. Produces both corvol ether A and corvol ether B in similar concentrations. This Metarhizium acridum (strain CQMa 102) protein is Sesquiterpene synthase MAC_05714.